A 496-amino-acid chain; its full sequence is Lysine--tRNA ligase (496 aa).

Glu-409 and Glu-416 together coordinate Mg(2+).

Belongs to the class-II aminoacyl-tRNA synthetase family. In terms of assembly, homodimer. Mg(2+) serves as cofactor.

It localises to the cytoplasm. It carries out the reaction tRNA(Lys) + L-lysine + ATP = L-lysyl-tRNA(Lys) + AMP + diphosphate. This Streptococcus pneumoniae serotype 4 (strain ATCC BAA-334 / TIGR4) protein is Lysine--tRNA ligase.